A 128-amino-acid chain; its full sequence is SH2 domain-containing protein 1A (128 aa).

One can recognise an SH2 domain in the interval Val6 to Val102. The tract at residues Asp67–Gln92 is interaction with FYN SH3 domain. At Lys89 the chain carries N6-acetyllysine. Positions Glu103–Pro128 are disordered. The span at Gly116 to Pro128 shows a compositional bias: basic and acidic residues.

As to quaternary structure, interacts with CD84, CD244, LY9, SLAMF1 and FYN. Interacts with NTRK1, NTRK2 and NTRK3.

It is found in the cytoplasm. Functionally, cytoplasmic adapter regulating receptors of the signaling lymphocytic activation molecule (SLAM) family such as SLAMF1, CD244, LY9, CD84, SLAMF6 and SLAMF7. In SLAM signaling seems to cooperate with SH2D1B/EAT-2. Initially it has been proposed that association with SLAMF1 prevents SLAMF1 binding to inhibitory effectors including INPP5D/SHIP1 and PTPN11/SHP-2. However, by simultaneous interactions, recruits FYN which subsequently phosphorylates and activates SLAMF1. Positively regulates CD244/2B4- and CD84-mediated natural killer (NK) cell functions. Can also promote CD48-, SLAMF6 -, LY9-, and SLAMF7-mediated NK cell activation. In the context of NK cell-mediated cytotoxicity enhances conjugate formation with target cells. May also regulate the activity of the neurotrophin receptors NTRK1, NTRK2 and NTRK3. This is SH2 domain-containing protein 1A (SH2D1A) from Sus scrofa (Pig).